Consider the following 360-residue polypeptide: Peptide chain release factor 1 (360 aa).

N5-methylglutamine is present on Gln235. Residues 286–313 (RQQAEASTRRNLLGSGDRSDRNRTYNFP) are disordered.

Belongs to the prokaryotic/mitochondrial release factor family. Post-translationally, methylated by PrmC. Methylation increases the termination efficiency of RF1.

Its subcellular location is the cytoplasm. In terms of biological role, peptide chain release factor 1 directs the termination of translation in response to the peptide chain termination codons UAG and UAA. In Cronobacter sakazakii (strain ATCC BAA-894) (Enterobacter sakazakii), this protein is Peptide chain release factor 1.